Here is a 150-residue protein sequence, read N- to C-terminus: Oleosin Ara h 10.0102 (150 aa).

The next 2 helical transmembrane spans lie at 39 to 59 (VIAV…AGLA) and 73 to 93 (LFIL…LSVA).

This sequence belongs to the oleosin family. In terms of tissue distribution, expressed in seeds (at protein level).

The protein localises to the lipid droplet. The protein resides in the membrane. Functionally, may have a structural role to stabilize the lipid body during desiccation of the seed by preventing coalescence of the oil. Probably interacts with both lipid and phospholipid moieties of lipid bodies. May also provide recognition signals for specific lipase anchorage in lipolysis during seedling growth. The sequence is that of Oleosin Ara h 10.0102 from Arachis hypogaea (Peanut).